We begin with the raw amino-acid sequence, 71 residues long: Virion membrane protein A13 homolog (71 aa).

Residues 1–21 (MGIIDTFVITAVTVIIFCLLI) traverse the membrane as a helical segment. Residues 22-70 (YAAYKRYKCIPSPDDRDKVLKSTLNDDTLFNQTLTPDQVKALHRLVTSS) are Virion surface-facing.

Belongs to the chordopoxvirinae A13 family.

The protein localises to the virion membrane. Functionally, essential for the encapsidation of DNA into immature virions (IV) and the subsequent maturation of IV into mature virions (MV). In Vertebrata (FPV), this protein is Virion membrane protein A13 homolog.